We begin with the raw amino-acid sequence, 478 residues long: Violaxanthin de-epoxidase, chloroplastic (478 aa).

A coiled-coil region spans residues 388 to 453; sequence LVERLEKKVE…RELSKEEMDV (66 aa).

This sequence belongs to the calycin superfamily. Lipocalin family.

The protein resides in the plastid. It is found in the chloroplast thylakoid membrane. The enzyme catalyses all-trans-violaxanthin + 2 L-ascorbate = all-trans-zeaxanthin + 2 L-dehydroascorbate + 2 H2O. Part of the xanthophyll (or violaxanthin) cycle for controlling the concentration of zeaxanthin in chloroplasts. Catalyzes the two-step mono de-epoxidation reaction. Stereospecific for all-trans xanthophylls. Zeaxanthin induces the dissipation of excitation energy in the chlorophyll of the light-harvesting protein complex of photosystem II. This is Violaxanthin de-epoxidase, chloroplastic (VDE1) from Nicotiana tabacum (Common tobacco).